The sequence spans 184 residues: MGARLKEVYSTEIAPALVKRLQLKNVMEVPRVEKVVLNMGLGEAIQNIKVLESAVEELTRICGQKPVVTKAKKSIAQFKLREGMPIGCMVTLRRDKAYEFLDRLINVALPRVRDFKGVSKKGFDGRGNYTLGIREQLIFPEIDLEKVDKVKGLNVTIVTTAKNDEEGYALMEAIGMPFPKKAQD.

It belongs to the universal ribosomal protein uL5 family. Part of the 50S ribosomal subunit; part of the 5S rRNA/L5/L18/L25 subcomplex. Contacts the 5S rRNA and the P site tRNA. Forms a bridge to the 30S subunit in the 70S ribosome.

This is one of the proteins that bind and probably mediate the attachment of the 5S RNA into the large ribosomal subunit, where it forms part of the central protuberance. In the 70S ribosome it contacts protein S13 of the 30S subunit (bridge B1b), connecting the 2 subunits; this bridge is implicated in subunit movement. Contacts the P site tRNA; the 5S rRNA and some of its associated proteins might help stabilize positioning of ribosome-bound tRNAs. This chain is Large ribosomal subunit protein uL5, found in Syntrophotalea carbinolica (strain DSM 2380 / NBRC 103641 / GraBd1) (Pelobacter carbinolicus).